The sequence spans 138 residues: Acidic phospholipase A2 VP7 (138 aa).

A signal peptide spans 1-16 (MRTLWIVAVCLMGVEG). 7 disulfide bridges follow: cysteine 42/cysteine 131, cysteine 44/cysteine 60, cysteine 59/cysteine 111, cysteine 65/cysteine 138, cysteine 66/cysteine 104, cysteine 73/cysteine 97, and cysteine 91/cysteine 102. Positions 43, 45, and 47 each coordinate Ca(2+). Histidine 63 is a catalytic residue. Residue aspartate 64 participates in Ca(2+) binding. The active site involves aspartate 105.

The protein belongs to the phospholipase A2 family. Group II subfamily. D49 sub-subfamily. Does not form a complex. The cofactor is Ca(2+). In terms of tissue distribution, expressed by the venom gland.

The protein localises to the secreted. It catalyses the reaction a 1,2-diacyl-sn-glycero-3-phosphocholine + H2O = a 1-acyl-sn-glycero-3-phosphocholine + a fatty acid + H(+). Its function is as follows. Snake venom phospholipase A2 (PLA2) that is not toxic by itself, but the synergistical mixture of a basic and this acidic protein is lethal. PLA2 catalyzes the calcium-dependent hydrolysis of the 2-acyl groups in 3-sn-phosphoglycerides. This is Acidic phospholipase A2 VP7 from Daboia palaestinae (Palestine viper).